Here is a 386-residue protein sequence, read N- to C-terminus: Succinate--CoA ligase [ADP-forming] subunit beta (386 aa).

The ATP-grasp domain occupies 9 to 244 (KELLRQYGVA…LDEEDPKEIE (236 aa)). ATP is bound by residues Lys-46, 53-55 (GRG), Glu-99, Cys-102, and Glu-107. Residues Asn-199 and Asp-213 each contribute to the Mg(2+) site. Residues Asn-264 and 321–323 (GIM) each bind substrate.

It belongs to the succinate/malate CoA ligase beta subunit family. Heterotetramer of two alpha and two beta subunits. The cofactor is Mg(2+).

The enzyme catalyses succinate + ATP + CoA = succinyl-CoA + ADP + phosphate. It catalyses the reaction GTP + succinate + CoA = succinyl-CoA + GDP + phosphate. It functions in the pathway carbohydrate metabolism; tricarboxylic acid cycle; succinate from succinyl-CoA (ligase route): step 1/1. Functionally, succinyl-CoA synthetase functions in the citric acid cycle (TCA), coupling the hydrolysis of succinyl-CoA to the synthesis of either ATP or GTP and thus represents the only step of substrate-level phosphorylation in the TCA. The beta subunit provides nucleotide specificity of the enzyme and binds the substrate succinate, while the binding sites for coenzyme A and phosphate are found in the alpha subunit. This is Succinate--CoA ligase [ADP-forming] subunit beta from Halalkalibacterium halodurans (strain ATCC BAA-125 / DSM 18197 / FERM 7344 / JCM 9153 / C-125) (Bacillus halodurans).